Reading from the N-terminus, the 187-residue chain is Crossover junction endodeoxyribonuclease RuvC (187 aa).

Residues aspartate 7, glutamate 67, and aspartate 140 contribute to the active site. Mg(2+) is bound by residues aspartate 7, glutamate 67, and aspartate 140.

Belongs to the RuvC family. Homodimer which binds Holliday junction (HJ) DNA. The HJ becomes 2-fold symmetrical on binding to RuvC with unstacked arms; it has a different conformation from HJ DNA in complex with RuvA. In the full resolvosome a probable DNA-RuvA(4)-RuvB(12)-RuvC(2) complex forms which resolves the HJ. The cofactor is Mg(2+).

Its subcellular location is the cytoplasm. It catalyses the reaction Endonucleolytic cleavage at a junction such as a reciprocal single-stranded crossover between two homologous DNA duplexes (Holliday junction).. Functionally, the RuvA-RuvB-RuvC complex processes Holliday junction (HJ) DNA during genetic recombination and DNA repair. Endonuclease that resolves HJ intermediates. Cleaves cruciform DNA by making single-stranded nicks across the HJ at symmetrical positions within the homologous arms, yielding a 5'-phosphate and a 3'-hydroxyl group; requires a central core of homology in the junction. The consensus cleavage sequence is 5'-(A/T)TT(C/G)-3'. Cleavage occurs on the 3'-side of the TT dinucleotide at the point of strand exchange. HJ branch migration catalyzed by RuvA-RuvB allows RuvC to scan DNA until it finds its consensus sequence, where it cleaves and resolves the cruciform DNA. The chain is Crossover junction endodeoxyribonuclease RuvC from Chlorobaculum parvum (strain DSM 263 / NCIMB 8327) (Chlorobium vibrioforme subsp. thiosulfatophilum).